The following is a 183-amino-acid chain: Protein Syd (183 aa).

It belongs to the Syd family.

It localises to the cell inner membrane. Functionally, interacts with the SecY protein in vivo. May bind preferentially to an uncomplexed state of SecY, thus functioning either as a chelating agent for excess SecY in the cell or as a regulatory factor that negatively controls the translocase function. The polypeptide is Protein Syd (Aliivibrio fischeri (strain MJ11) (Vibrio fischeri)).